Consider the following 442-residue polypeptide: NAD kinase 2, mitochondrial (442 aa).

Residues 1–62 (MTCYRGFLLG…RELAGCGSRA (62 aa)) constitute a mitochondrion transit peptide. A compositionally biased stretch (low complexity) spans 24–36 (RGPGAGGPAARPR). The tract at residues 24-60 (RGPGAGGPAARPRLGGDGGGRRHLGQGQPRELAGCGS) is disordered. Lysine 76 carries the N6-acetyllysine; alternate modification. Lysine 76 is subject to N6-succinyllysine; alternate. Residue serine 188 is modified to Phosphoserine. At lysine 302 the chain carries N6-succinyllysine. Position 317 is an N6-acetyllysine; alternate (lysine 317). N6-succinyllysine; alternate is present on lysine 317. Serine 367 carries the post-translational modification Phosphoserine. Lysine 397 bears the N6-acetyllysine mark.

This sequence belongs to the NAD kinase family. In terms of assembly, homodimer. In terms of tissue distribution, widely expressed.

The protein resides in the mitochondrion. It carries out the reaction NAD(+) + ATP = ADP + NADP(+) + H(+). Inhibited by NADH, NADPH and NADP(+). Functionally, mitochondrial NAD(+) kinase that phosphorylates NAD(+) to yield NADP(+). Can use both ATP or inorganic polyphosphate as the phosphoryl donor. Also has weak NADH kinase activity in vitro; however NADH kinase activity is much weaker than the NAD(+) kinase activity and may not be relevant in vivo. The chain is NAD kinase 2, mitochondrial (NADK2) from Homo sapiens (Human).